A 272-amino-acid chain; its full sequence is Granaticin polyketide synthase putative ketoacyl reductase 1 (272 aa).

Position 21–45 (21–45 (LVTGATSGIGLAIARRLAALGARTF)) interacts with NAD(+). Substrate is bound at residue serine 155. Tyrosine 168 (proton acceptor) is an active-site residue.

It belongs to the short-chain dehydrogenases/reductases (SDR) family.

It participates in antibiotic biosynthesis; granaticin biosynthesis. This is Granaticin polyketide synthase putative ketoacyl reductase 1 (gra-orf5) from Streptomyces violaceoruber.